Consider the following 157-residue polypeptide: ATP synthase subunit delta (157 aa).

This sequence belongs to the ATPase delta chain family. F-type ATPases have 2 components, F(1) - the catalytic core - and F(0) - the membrane proton channel. F(1) has five subunits: alpha(3), beta(3), gamma(1), delta(1), epsilon(1). F(0) has three main subunits: a(1), b(2) and c(10-14). The alpha and beta chains form an alternating ring which encloses part of the gamma chain. F(1) is attached to F(0) by a central stalk formed by the gamma and epsilon chains, while a peripheral stalk is formed by the delta and b chains.

It is found in the cell membrane. In terms of biological role, f(1)F(0) ATP synthase produces ATP from ADP in the presence of a proton or sodium gradient. F-type ATPases consist of two structural domains, F(1) containing the extramembraneous catalytic core and F(0) containing the membrane proton channel, linked together by a central stalk and a peripheral stalk. During catalysis, ATP synthesis in the catalytic domain of F(1) is coupled via a rotary mechanism of the central stalk subunits to proton translocation. Its function is as follows. This protein is part of the stalk that links CF(0) to CF(1). It either transmits conformational changes from CF(0) to CF(1) or is implicated in proton conduction. The sequence is that of ATP synthase subunit delta from Chloroflexus aggregans (strain MD-66 / DSM 9485).